The following is a 341-amino-acid chain: D-aspartate oxidase (341 aa).

Position 1 is a blocked amino end (Met) (Met1). Residues Asp36, Lys37, Thr43, Ser44, Met50, Gly307, and Ile311 each coordinate FAD. A Microbody targeting signal motif is present at residues 339 to 341; the sequence is SKL.

It belongs to the DAMOX/DASOX family. As to quaternary structure, monomer. Interacts with PEX5; the interaction is direct and required for localization of DDO to the peroxisome. FAD serves as cofactor. In terms of tissue distribution, in the kidney, expressed in epithelial cells of the proximal tubules and in the liver (at protein level).

Its subcellular location is the peroxisome matrix. It localises to the cytoplasm. The protein localises to the cytosol. It carries out the reaction D-aspartate + O2 + H2O = oxaloacetate + H2O2 + NH4(+). It catalyses the reaction D-glutamate + O2 + H2O = H2O2 + 2-oxoglutarate + NH4(+). Its activity is regulated as follows. Inhibited by phenylglyoxal; chemical modification of arginine residues in the enzyme with phenylglyoxal leads to the irreversible loss of activity towards dicarboxylic D-amino acids, paralleled by a transient appearance of activity versus monocarboxylic ones. Functionally, selectively catalyzes the oxidative deamination of acidic amino acids. Suppresses the level of D-aspartate in the brain, an amino acid that can act as an agonist for glutamate receptors. Protects the organism from the toxicity of D-amino acids. May also function in the intestine. The protein is D-aspartate oxidase (DDO) of Bos taurus (Bovine).